We begin with the raw amino-acid sequence, 410 residues long: Multifunctional CCA protein (410 aa).

ATP contacts are provided by Gly8 and Arg11. Gly8 and Arg11 together coordinate CTP. Mg(2+)-binding residues include Asp21 and Asp23. ATP contacts are provided by Arg91, Arg138, and Arg141. Residues Arg91, Arg138, and Arg141 each coordinate CTP. Residues 229 to 347 (TGIHQEMVSD…AQLALVCEAD (119 aa)) form the HD domain.

It belongs to the tRNA nucleotidyltransferase/poly(A) polymerase family. Bacterial CCA-adding enzyme type 1 subfamily. In terms of assembly, monomer. Can also form homodimers and oligomers. It depends on Mg(2+) as a cofactor. Ni(2+) is required as a cofactor.

The enzyme catalyses a tRNA precursor + 2 CTP + ATP = a tRNA with a 3' CCA end + 3 diphosphate. The catalysed reaction is a tRNA with a 3' CCA end + 2 CTP + ATP = a tRNA with a 3' CCACCA end + 3 diphosphate. Its function is as follows. Catalyzes the addition and repair of the essential 3'-terminal CCA sequence in tRNAs without using a nucleic acid template. Adds these three nucleotides in the order of C, C, and A to the tRNA nucleotide-73, using CTP and ATP as substrates and producing inorganic pyrophosphate. tRNA 3'-terminal CCA addition is required both for tRNA processing and repair. Also involved in tRNA surveillance by mediating tandem CCA addition to generate a CCACCA at the 3' terminus of unstable tRNAs. While stable tRNAs receive only 3'-terminal CCA, unstable tRNAs are marked with CCACCA and rapidly degraded. The sequence is that of Multifunctional CCA protein from Xanthomonas axonopodis pv. citri (strain 306).